The following is a 141-amino-acid chain: VLSPADKTNVKAAWGKVGGHAGEYGAEALERMFLSFPTTKTYFPHFDLSHGSAQVKGHGKKVADALTLAVGHVDDMPQALSALSDLHAHKLRVDPVNFKLLSHCLLVTLAAHLPAEFTPAVHASLDKFLASVSTVLTSKYR.

The region spanning 1–141 (VLSPADKTNV…VSTVLTSKYR (141 aa)) is the Globin domain. The residue at position 3 (Ser-3) is a Phosphoserine. N6-succinyllysine is present on Lys-7. At Thr-8 the chain carries Phosphothreonine. An N6-succinyllysine modification is found at Lys-11. An N6-acetyllysine; alternate modification is found at Lys-16. Lys-16 is subject to N6-succinyllysine; alternate. The residue at position 24 (Tyr-24) is a Phosphotyrosine. Ser-35 bears the Phosphoserine mark. Position 40 is an N6-succinyllysine (Lys-40). The residue at position 49 (Ser-49) is a Phosphoserine. His-58 contributes to the O2 binding site. A heme b-binding site is contributed by His-87. Ser-102 is modified (phosphoserine). At Thr-108 the chain carries Phosphothreonine. Phosphoserine occurs at positions 124 and 131. Phosphothreonine occurs at positions 134 and 137. At Ser-138 the chain carries Phosphoserine.

It belongs to the globin family. As to quaternary structure, heterotetramer of two alpha chains and two beta chains. Red blood cells.

Its function is as follows. Involved in oxygen transport from the lung to the various peripheral tissues. In Macaca fascicularis (Crab-eating macaque), this protein is Hemoglobin subunit alpha-A/Q/R/T.